Here is a 395-residue protein sequence, read N- to C-terminus: Renin (395 aa).

Residues methionine 1–alanine 21 form the signal peptide. Positions leucine 22–lysine 43 are cleaved as a propeptide — activation peptide. N-linked (GlcNAc...) asparagine glycosylation is present at asparagine 64. A Peptidase A1 domain is found at tyrosine 79 to alanine 392. The active site involves aspartate 97. 2 disulfide bridges follow: cysteine 110–cysteine 117 and cysteine 274–cysteine 278. Aspartate 283 is a catalytic residue. Cysteine 316 and cysteine 351 are oxidised to a cystine.

It belongs to the peptidase A1 family. Post-translationally, N-glycosylated. In terms of tissue distribution, expressed by the venom gland (at protein level).

It localises to the secreted. The enzyme catalyses Cleavage of Leu-|-Xaa bond in angiotensinogen to generate angiotensin I.. Its activity is regulated as follows. Inhibited completely by aspartyl protease inhibitor pepstatin A, but not by the serine- or metalloproteinase inhibitors PMSF or EDTA. Renin is a highly specific endopeptidase, whose only known function is to generate angiotensin I from angiotensinogen in the plasma, initiating a cascade of reactions that produce an elevation of blood pressure and increased sodium retention by the kidney. This protein is also found in snake venom and shown to specifically cleave human and porcine angiotensinogen into angiotensin I. It does not have general protease activity, no cleavage of alpha or beta casein. May be directly responsible for elevation of blood pressure in the victims of envenomation. This chain is Renin, found in Echis ocellatus (Ocellated saw-scaled viper).